The primary structure comprises 257 residues: Acetylglutamate kinase (257 aa).

Residues 43 to 44 (GG), R65, and N157 each bind substrate.

It belongs to the acetylglutamate kinase family. ArgB subfamily.

It localises to the cytoplasm. The catalysed reaction is N-acetyl-L-glutamate + ATP = N-acetyl-L-glutamyl 5-phosphate + ADP. Its pathway is amino-acid biosynthesis; L-arginine biosynthesis; N(2)-acetyl-L-ornithine from L-glutamate: step 2/4. Its function is as follows. Catalyzes the ATP-dependent phosphorylation of N-acetyl-L-glutamate. The polypeptide is Acetylglutamate kinase (Actinobacillus succinogenes (strain ATCC 55618 / DSM 22257 / CCUG 43843 / 130Z)).